The sequence spans 387 residues: Succinate--CoA ligase [ADP-forming] subunit beta (387 aa).

Positions 9 to 245 constitute an ATP-grasp domain; sequence KDLLESYGLK…KSQENAKELK (237 aa). ATP-binding positions include K46, 53-55, E100, Y103, and E108; that span reads GRG. Mg(2+) contacts are provided by N200 and D214. Residues N265 and 322 to 324 contribute to the substrate site; that span reads GIV.

Belongs to the succinate/malate CoA ligase beta subunit family. As to quaternary structure, heterotetramer of two alpha and two beta subunits. Mg(2+) is required as a cofactor.

It catalyses the reaction succinate + ATP + CoA = succinyl-CoA + ADP + phosphate. The enzyme catalyses GTP + succinate + CoA = succinyl-CoA + GDP + phosphate. The protein operates within carbohydrate metabolism; tricarboxylic acid cycle; succinate from succinyl-CoA (ligase route): step 1/1. Its function is as follows. Succinyl-CoA synthetase functions in the citric acid cycle (TCA), coupling the hydrolysis of succinyl-CoA to the synthesis of either ATP or GTP and thus represents the only step of substrate-level phosphorylation in the TCA. The beta subunit provides nucleotide specificity of the enzyme and binds the substrate succinate, while the binding sites for coenzyme A and phosphate are found in the alpha subunit. The protein is Succinate--CoA ligase [ADP-forming] subunit beta of Francisella tularensis subsp. novicida (strain U112).